A 378-amino-acid chain; its full sequence is uncharacterized protein (378 aa).

Positions 208 to 317 (GIGFADLSSF…NPVNLAARLV (110 aa)) constitute a Guanylate cyclase domain.

Belongs to the adenylyl cyclase class-4/guanylyl cyclase family.

This is an uncharacterized protein from Mycobacterium bovis (strain ATCC BAA-935 / AF2122/97).